The chain runs to 685 residues: Tripartite terminase subunit 1 (685 aa).

The C3H1-type zinc finger occupies 173 to 201; sequence CWRCVGELMVLPNHGNPSTAEGTHVSCNH. Disordered regions lie at residues 231–254 and 394–423; these read EEKARPGGPEEGAVPGPGRPEAEG and LGRGEEEASRESPEVPRPAGAREPGPSGAL. A compositionally biased stretch (basic and acidic residues) spans 395 to 407; the sequence is GRGEEEASRESPE. ATP is bound at residue 619–626; the sequence is YNKTWGRS.

Belongs to the herpesviridae TRM1 protein family. In terms of assembly, associates with TRM2 and TRM3 to form the tripartite terminase complex. Interacts with portal protein.

Its subcellular location is the host nucleus. In terms of biological role, component of the molecular motor that translocates viral genomic DNA in empty capsid during DNA packaging. Forms a tripartite terminase complex together with TRM2 and TRM3 in the host cytoplasm. Once the complex reaches the host nucleus, it interacts with the capsid portal vertex. This portal forms a ring in which genomic DNA is translocated into the capsid. TRM1 carries an endonuclease activity that plays an important role for the cleavage of concatemeric viral DNA into unit length genomes. This Epstein-Barr virus (strain B95-8) (HHV-4) protein is Tripartite terminase subunit 1.